Here is a 255-residue protein sequence, read N- to C-terminus: Diphthine synthase (255 aa).

S-adenosyl-L-methionine is bound by residues leucine 9, aspartate 85, valine 88, 113 to 114 (SI), leucine 164, alanine 207, and histidine 232.

It belongs to the diphthine synthase family. In terms of assembly, homodimer.

It catalyses the reaction 2-[(3S)-amino-3-carboxypropyl]-L-histidyl-[translation elongation factor 2] + 3 S-adenosyl-L-methionine = diphthine-[translation elongation factor 2] + 3 S-adenosyl-L-homocysteine + 3 H(+). The protein operates within protein modification; peptidyl-diphthamide biosynthesis. Its function is as follows. S-adenosyl-L-methionine-dependent methyltransferase that catalyzes the trimethylation of the amino group of the modified target histidine residue in translation elongation factor 2 (EF-2), to form an intermediate called diphthine. The three successive methylation reactions represent the second step of diphthamide biosynthesis. This Methanococcus maripaludis (strain DSM 14266 / JCM 13030 / NBRC 101832 / S2 / LL) protein is Diphthine synthase.